Here is a 105-residue protein sequence, read N- to C-terminus: DNA-binding protein HU (105 aa).

This sequence belongs to the bacterial histone-like protein family.

Functionally, histone-like DNA-binding protein which is capable of wrapping DNA to stabilize it, and thus to prevent its denaturation under extreme environmental conditions. The polypeptide is DNA-binding protein HU (hup) (Treponema pallidum (strain Nichols)).